A 174-amino-acid polypeptide reads, in one-letter code: Micrococcal nuclease (174 aa).

The signal sequence occupies residues Met1–Ala23. Residues Arg52, Glu60, and Arg94 contribute to the active site.

It belongs to the thermonuclease family.

The enzyme catalyses Endonucleolytic cleavage to nucleoside 3'-phosphates and 3'-phosphooligonucleotide end-products.. This Shigella flexneri protein is Micrococcal nuclease (nuc).